Consider the following 265-residue polypeptide: Insulin-like growth factor-binding protein 5 (265 aa).

Residues 1 to 21 (MEMLLPMCLLLVSLCLGQCQA) form the signal peptide. The IGFBP N-terminal domain maps to 24–104 (SFVHCEPCDD…LHGRGVCLNL (81 aa)). Cystine bridges form between C28-C54, C31-C56, C39-C57, C46-C60, C68-C81, and C75-C101. The span at 111–121 (SKIDRESREED) shows a compositional bias: basic and acidic residues. Residues 111–137 (SKIDRESREEDPTTSETEDIYQSKHRG) form a disordered region. The region spanning 182–256 (MGPCRRQVET…IDYVNGDLQC (75 aa)) is the Thyroglobulin type-1 domain. Intrachain disulfides connect C185-C212, C223-C234, and C236-C256.

It is found in the secreted. Its function is as follows. IGF-binding proteins prolong the half-life of the IGFs and have been shown to either inhibit or stimulate the growth promoting effects of the IGFs on cell culture. They alter the interaction of IGFs with their cell surface receptors. Promotes anterior neural development by stimulating insulin growth factor (IGF) signaling via IGF receptors. The polypeptide is Insulin-like growth factor-binding protein 5 (Xenopus laevis (African clawed frog)).